The primary structure comprises 195 residues: Putative inactive carbonic anhydrase 5B-like protein (195 aa).

Position 121-122 (121-122 (TT)) interacts with substrate.

The protein belongs to the alpha-carbonic anhydrase family.

In Homo sapiens (Human), this protein is Putative inactive carbonic anhydrase 5B-like protein (CA5BP1).